The following is a 741-amino-acid chain: Protein O-mannosyl-transferase TMTC4 (741 aa).

Over 1–14 (MAVLDTDLDHILPS) the chain is Cytoplasmic. The helical transmembrane segment at 15–35 (SVLPPFWAKLVVGSVAIVCFA) threads the bilayer. Residues 36 to 111 (RSYDGDFVFD…FHPVGFHVVN (76 aa)) lie on the Extracellular side of the membrane. An N-linked (GlcNAc...) asparagine glycan is attached at asparagine 78. A helical membrane pass occupies residues 112 to 132 (ILLHSGISVLMVDVFSVLFGG). Residues 133-141 (LQYTSKGRR) lie on the Cytoplasmic side of the membrane. A helical membrane pass occupies residues 142-162 (LHLAPRASLLAALLFAVHPVH). Over 163–165 (TEC) the chain is Extracellular. The helical transmembrane segment at 166–186 (VAGVVGRADLLCALFFLLSFL) threads the bilayer. At 187-198 (GYCKAFRESNKE) the chain is on the cytoplasmic side. Residues 199–219 (GAHSSTFWVLLSIFLGAVAML) traverse the membrane as a helical segment. Residues 220-224 (CKEQG) lie on the Extracellular side of the membrane. A helical membrane pass occupies residues 225-245 (ITVLGLNAVFDILVIGKFNVL). Residues 246-268 (EIVQKVLHKDKSLENLGMLRNGG) are Cytoplasmic-facing. A helical transmembrane segment spans residues 269–288 (LLFRMTLLTSGGAGMLYVRW). The Extracellular portion of the chain corresponds to 289 to 354 (RIMGTGPPAF…PLIKSISDWR (66 aa)). Residues 355–375 (VIALAALWFCLIGLICQALCS) traverse the membrane as a helical segment. Residues 376–382 (EDGHKRR) lie on the Cytoplasmic side of the membrane. The helical transmembrane segment at 383–403 (ILTLGLGFLVIPFLPASNLFF) threads the bilayer. The Extracellular segment spans residues 404–412 (RVGFVVAER). A helical transmembrane segment spans residues 413–433 (VLYLPSVGYCVLLTFGFGALS). Topologically, residues 434–440 (KHTKKKK) are cytoplasmic. The helical transmembrane segment at 441-461 (LIAAVVLGILFINTLRCVLRS) threads the bilayer. The Extracellular portion of the chain corresponds to 462–741 (GEWRSEEQLF…KLELMQKKAV (280 aa)). 7 TPR repeats span residues 482–515 (AKVH…NPKY), 516–549 (VHAM…QPDF), 550–583 (AAAW…RRKY), 584–617 (PDCY…KPEH), 618–651 (SLAW…IPND), 652–685 (HSLM…NPNA), and 686–719 (ASYH…DPTA). Asparagine 497 carries N-linked (GlcNAc...) asparagine glycosylation. The N-linked (GlcNAc...) asparagine glycan is linked to asparagine 609.

Belongs to the TMTC family.

The protein localises to the membrane. It localises to the endoplasmic reticulum. The enzyme catalyses a di-trans,poly-cis-dolichyl beta-D-mannosyl phosphate + L-seryl-[protein] = 3-O-(alpha-D-mannosyl)-L-seryl-[protein] + a di-trans,poly-cis-dolichyl phosphate + H(+). It carries out the reaction a di-trans,poly-cis-dolichyl beta-D-mannosyl phosphate + L-threonyl-[protein] = 3-O-(alpha-D-mannosyl)-L-threonyl-[protein] + a di-trans,poly-cis-dolichyl phosphate + H(+). The protein operates within protein modification; protein glycosylation. Its function is as follows. Transfers mannosyl residues to the hydroxyl group of serine or threonine residues. The 4 members of the TMTC family are O-mannosyl-transferases dedicated primarily to the cadherin superfamily, each member seems to have a distinct role in decorating the cadherin domains with O-linked mannose glycans at specific regions. Also acts as O-mannosyl-transferase on other proteins such as PDIA3. This chain is Protein O-mannosyl-transferase TMTC4, found in Homo sapiens (Human).